The primary structure comprises 208 residues: Ras-related protein Rab-6A (208 aa).

The residue at position 2 (S2) is an N-acetylserine. GTP contacts are provided by S23, V24, G25, K26, T27, S28, D39, N40, Y42, and T45. T27 is a Mg(2+) binding site. Residues 32–50 carry the Switch 1 motif; that stretch reads RFMYDSFDNTYQATIGIDF. 2 residues coordinate Mg(2+): T45 and D68. Residues 69 to 88 carry the Switch 2 motif; the sequence is TAGQERFRSLIPSYIRDSTV. G71 lines the GTP pocket. Y82 is subject to O-AMP-tyrosine; by Legionella DrrA. The GTP site is built by N126, K127, D129, S156, A157, and K158. A Phosphoserine modification is found at S184. 2 S-geranylgeranyl cysteine lipidation sites follow: C206 and C208. Position 208 is a cysteine methyl ester (C208).

Belongs to the small GTPase superfamily. Rab family. In terms of assembly, interacts (GTP-bound) with DYNLRB1; the interaction is direct. Interacts with BICD1. Interacts with BICD2; the interaction is direct. Interacts (GTP-bound) with VPS13B. Interacts with BICD1. Interacts (GDP-bound) with DYNLRB1; the interaction is direct. Interacts (GTP-bound) with VPS13B. As to quaternary structure, interacts with BICDL1; leads to its accumulation in the pericentrosomal region. Interacts with SCYL1BP1. Interacts with VSP52. Interacts with RABGAP1. Interacts with GCC2 (via its GRIP domain). Interacts with RAB6IP1 (via its RUN 1 domain). Interacts with TMF1. Interacts with CIMAP3. Interacts (GTP-bound) with APBA1/MINT1 isoform 2, also called Mint1_826, but not with isoform 1. Interacts with RIC1; the interaction is direct with a preference for RAB6A-GDP. Interacts with RGP1; the interaction is direct with a preference for RAB6A-GDP. In terms of assembly, (Microbial infection) Interacts with human cytomegalovirus protein UL32. It depends on Mg(2+) as a cofactor. Post-translationally, prenylated. As to expression, ubiquitous.

Its subcellular location is the golgi apparatus membrane. It localises to the cytoplasmic vesicle. The protein localises to the secretory vesicle. The protein resides in the acrosome membrane. The catalysed reaction is GTP + H2O = GDP + phosphate + H(+). With respect to regulation, regulated by guanine nucleotide exchange factors (GEFs) which promote the exchange of bound GDP for free GTP. Regulated by GTPase activating proteins (GAPs) which increase the GTP hydrolysis activity. Inhibited by GDP dissociation inhibitors (GDIs). In terms of biological role, the small GTPases Rab are key regulators of intracellular membrane trafficking, from the formation of transport vesicles to their fusion with membranes. Rabs cycle between an inactive GDP-bound form and an active GTP-bound form that is able to recruit to membranes different sets of downstream effectors directly responsible for vesicle formation, movement, tethering and fusion. RAB6A acts as a regulator of COPI-independent retrograde transport from the Golgi apparatus towards the endoplasmic reticulum (ER). Has a low GTPase activity. Recruits VPS13B to the Golgi membrane. Plays a role in neuron projection development. In Homo sapiens (Human), this protein is Ras-related protein Rab-6A.